The following is an 869-amino-acid chain: Rho GTPase-activating protein 27 (869 aa).

The SH3 domain maps to 6–69 (EGDVYVLVEH…PAQYVRELPA (64 aa)). Phosphotyrosine is present on A28. Residues 104–134 (GADGSSAEPRGRASSLCGPARQRTGGQRNSL) are disordered. Phosphoserine is present on residues S155, S215, and S249. Disordered regions lie at residues 208–300 (RCPP…SGES) and 331–401 (ETEE…GWSC). Residues 209 to 220 (CPPRAESPKQVD) show a composition bias toward basic and acidic residues. Positions 235–250 (RATSPRSAAAPPRLSP) are enriched in low complexity. Positions 246–280 (PRLSPVWETHTDTGTGRPYYYNPDTGVTTWESPFE) constitute a WW 1 domain. Residues 283-294 (EGTTSPATSRAS) are compositionally biased toward polar residues. A WW 2 domain is found at 299 to 333 (ESLETEWGQYWDEESRRVFFYNPLTGETAWEDETE). A compositionally biased stretch (polar residues) spans 345-356 (MQPSLSPRSPGQ). S350 bears the Phosphoserine mark. The region spanning 414–447 (QFTQEQWVRLEDQHGKPYFYNPEDSSVQWELPQV) is the WW 3 domain. 2 disordered regions span residues 449–477 (IPAP…KIKT) and 623–642 (EEDV…GLES). 2 positions are modified to phosphoserine: S459 and S462. A Phosphothreonine modification is found at T464. S469 bears the Phosphoserine mark. Residues 477–593 (TLDKAGVLHR…WHKAIAEGIS (117 aa)) form the PH domain. Phosphoserine occurs at positions 632 and 636. The 190-residue stretch at 677–866 (CALAQLCERE…LILHQCADIF (190 aa)) folds into the Rho-GAP domain.

As to quaternary structure, interacts with SH3KBP1/CIN85. As to expression, widely expressed. Highly expressed in kidney, lung, small intestine and thymus.

Its subcellular location is the cytoplasm. The protein resides in the membrane. Functionally, rho GTPase-activating protein which may be involved in clathrin-mediated endocytosis. GTPase activators for the Rho-type GTPases act by converting them to an inactive GDP-bound state. Has activity toward CDC42 and RAC1. In Mus musculus (Mouse), this protein is Rho GTPase-activating protein 27 (Arhgap27).